We begin with the raw amino-acid sequence, 217 residues long: Large ribosomal subunit protein uL1 (217 aa).

The protein belongs to the universal ribosomal protein uL1 family. As to quaternary structure, part of the 50S ribosomal subunit.

Binds directly to 23S rRNA. The L1 stalk is quite mobile in the ribosome, and is involved in E site tRNA release. Functionally, protein L1 is also a translational repressor protein, it controls the translation of the L11 operon by binding to its mRNA. The chain is Large ribosomal subunit protein uL1 from Wolbachia pipientis wMel.